A 716-amino-acid chain; its full sequence is Radial spoke head protein 4 homolog A (716 aa).

4 disordered regions span residues 1 to 164 (MEDS…CGRR), 375 to 410 (EGED…PKSF), 506 to 526 (GEEE…FEEN), and 697 to 716 (LLAA…DDYD). Basic and acidic residues predominate over residues 8 to 25 (KQEKENQEELGETRRPWE). 3 stretches are compositionally biased toward low complexity: residues 29–42 (AASP…SSEP), 54–66 (QSRS…PQSR), and 80–100 (SSPA…LAPA). Residues 140–156 (HHTSQSEGNTFQQSQQP) show a composition bias toward polar residues. Over residues 375–389 (EGEDEEEVEEEDVAE) the composition is skewed to acidic residues. The residue at position 396 (Ser396) is a Phosphoserine. Composition is skewed to acidic residues over residues 506-516 (GEEEGEEEEEA) and 701-716 (ENEE…DDYD).

It belongs to the flagellar radial spoke RSP4/6 family. As to quaternary structure, interacts with RSPH6A. In terms of tissue distribution, expressed in trachea, lungs, and testes. Very strong expression is detected in nasal brushings.

It is found in the cytoplasm. The protein localises to the cytoskeleton. The protein resides in the cilium axoneme. It localises to the cell projection. Its subcellular location is the cilium. In terms of biological role, component of the axonemal radial spoke head which plays an important role in ciliary motility. Essential for triplet radial spokes (RS1, RS2 and RS3) head assembly in the motile cilia. The sequence is that of Radial spoke head protein 4 homolog A (RSPH4A) from Homo sapiens (Human).